The sequence spans 163 residues: Methyl-CpG-binding domain-containing protein 3 (163 aa).

A CW-type zinc finger spans residues 6 to 56 (TTLIDSYAAQCWKCLKVRSIESQEDYEEIRSKTLEKFFECKRCEEPGDMVM). The 73-residue stretch at 65–137 (WFQDEHSIPK…EEVSFAAPKR (73 aa)) folds into the MBD domain. The interval 140-163 (LKKKPVDSHSSSRNTEEDGVSRDA) is disordered. Residues 153 to 163 (NTEEDGVSRDA) are compositionally biased toward basic and acidic residues.

It localises to the nucleus. Its function is as follows. Probable transcriptional regulator. The polypeptide is Methyl-CpG-binding domain-containing protein 3 (MBD3) (Arabidopsis thaliana (Mouse-ear cress)).